The sequence spans 160 residues: Nucleotide-binding protein VP1617 (160 aa).

It belongs to the YajQ family.

Nucleotide-binding protein. This chain is Nucleotide-binding protein VP1617, found in Vibrio parahaemolyticus serotype O3:K6 (strain RIMD 2210633).